Reading from the N-terminus, the 326-residue chain is MSHEIKDLNNYHYTSSYNHYNINNQNMINLPYVSGPSAYNANMISSSQVGFDLPSKNLSPQGAFELGFELSPSSSDFFNPSLDQENGLYNAYNYNSSQKSHEVVGDGCATIKSEVRVSASPSSSEADHHPGEDSGKIRKKREVRDGGEDDQRSQKVVKTKKKEEKKKEPRVSFMTKTEVDHLEDGYRWRKYGQKAVKNSPYPRSYYRCTTQKCNVKKRVERSYQDPTVVITTYESQHNHPIPTNRRTAMFSGTTASDYNPSSSPIFSDLIINTPRSFSNDDLFRVPYASVNVNPSYHQQQHGFHQQESEFELLKEMFPSVFFKQEP.

The segment at 115–172 is disordered; that stretch reads VRVSASPSSSEADHHPGEDSGKIRKKREVRDGGEDDQRSQKVVKTKKKEEKKKEPRVS. Composition is skewed to basic and acidic residues over residues 125-153 and 161-170; these read EADH…DQRS and KKEEKKKEPR. Positions 177–242 form a DNA-binding region, WRKY; it reads TEVDHLEDGY…YESQHNHPIP (66 aa).

The protein belongs to the WRKY group II-c family. As to quaternary structure, interacts with VQ9 (via N-terminus). As to expression, highly expressed in roots and at lower levels in rosette leaves, cauline leaves, stems, flowers and siliques.

It is found in the nucleus. Functionally, transcription factor. Interacts specifically with the W box (5'-TTGAC[CT]-3'), a frequently occurring stress-responsive cis-acting element. Functions as a positive regulator of salt stress response. Binds the W box of LTI78/RD29A stress-response gene and directly regulates its transcription under salt stress. Functions antagonistically with VQ9 to regulate sodium and potassium homeostasis under salt stress by regulating the expression of downstream SOS (SALT OVERLY SENSITIVE) stress-responsive genes. The DNA-binding activity of WRKY8 is decreased by VQ9. Functions as a negative regulator of basal resistance to the bacterial pathogen P.syringae and as positive regulator of resistance to the fungal pathogen to B.cinerea. Functions as a positive regulator of defense response againt tobamovirus (TMV) by regulating both the abscisic acid and ethylene signaling pathways. Positively regulates ABI4 expression and negatively modulates ACS6 and ERF104 expression by directly binding to the W box consensus motifs within their promoters. This is WRKY transcription factor 8 (WRKY8) from Arabidopsis thaliana (Mouse-ear cress).